The chain runs to 267 residues: Thiamine thiazole synthase (267 aa).

NAD(+)-binding positions include Ser41, 60–61 (ER), Gly68, Val132, and 160–162 (HVD). Asp162 and His177 together coordinate Fe cation. Met227 serves as a coordination point for NAD(+). Arg237 provides a ligand contact to glycine.

The protein belongs to the THI4 family. In terms of assembly, homooctamer; tetramer of dimers. Fe(2+) serves as cofactor.

The catalysed reaction is hydrogen sulfide + glycine + NAD(+) = ADP-5-ethyl-4-methylthiazole-2-carboxylate + nicotinamide + 3 H2O + H(+). Its pathway is cofactor biosynthesis; thiamine diphosphate biosynthesis. Involved in the biosynthesis of the thiazole moiety of thiamine. Catalyzes the conversion of NAD and glycine to adenosine diphosphate 5-(2-hydroxyethyl)-4-methylthiazole-2-carboxylate (ADT), an adenylated thiazole intermediate, using free sulfide as a source of sulfur. This is Thiamine thiazole synthase from Saccharolobus solfataricus (strain ATCC 35092 / DSM 1617 / JCM 11322 / P2) (Sulfolobus solfataricus).